The following is a 351-amino-acid chain: Calcium release-activated calcium channel protein 1 (351 aa).

Over residues 1–21 (MSVWTTANNSGLETPTKSPIT) the composition is skewed to polar residues. Disordered stretches follow at residues 1–39 (MSVW…TGNH) and 71–141 (HAHP…EDLH). The Cytoplasmic segment spans residues 1–163 (MSVWTTANNS…SRAKLKASSK (163 aa)). Composition is skewed to low complexity over residues 22 to 33 (SSVPRAARSSAV) and 80 to 93 (SNSP…SNNS). The segment covering 94-106 (AGFQRTSISNSLL) has biased composition (polar residues). The chain crosses the membrane as a helical span at residues 164–181 (TSALLSGFAMVAMVEVQL). At 182-191 (DHDTNVPPGM) the chain is on the extracellular side. Residues 192-212 (LIAFAICTTLLVAVHMLALMI) form a helical membrane-spanning segment. The Cytoplasmic segment spans residues 213–248 (STCILPNIETVCNLHSISLVHESPHERLHWYIETAW). Residues 249–269 (AFSTLLGLILFLLEIAILCWV) form a helical membrane-spanning segment. Residues 270–277 (KFYDLSPP) lie on the Extracellular side of the membrane. Residues 278 to 298 (AAWSACVVLIPVMIIFMAFAI) traverse the membrane as a helical segment. Residues 299–351 (HFYRSLVSHKYEVTVSGIRELEMLKEQMEQDHLEHHNNIRNNGMNYGASGDIV) lie on the Cytoplasmic side of the membrane.

The protein belongs to the Orai family. As to quaternary structure, hexamer.

The protein localises to the cell membrane. The enzyme catalyses Ca(2+)(in) = Ca(2+)(out). Its function is as follows. Pore-forming subunit of inward rectifying Ca(2+) release-activated Ca(2+) (CRAC) channels. Assembles in hexameric CRAC channels that mediate Ca(2+) influx upon depletion of endoplasmic reticulum Ca(2+) store and channel activation by Ca(2+) sensor Stim, a process known as store-operated Ca(2+) entry (SOCE). Regulates transcription factor NFAT nuclear import. The sequence is that of Calcium release-activated calcium channel protein 1 from Drosophila melanogaster (Fruit fly).